Here is a 363-residue protein sequence, read N- to C-terminus: S-adenosylmethionine:tRNA ribosyltransferase-isomerase (363 aa).

This sequence belongs to the QueA family. In terms of assembly, monomer.

The protein localises to the cytoplasm. It catalyses the reaction 7-aminomethyl-7-carbaguanosine(34) in tRNA + S-adenosyl-L-methionine = epoxyqueuosine(34) in tRNA + adenine + L-methionine + 2 H(+). The protein operates within tRNA modification; tRNA-queuosine biosynthesis. In terms of biological role, transfers and isomerizes the ribose moiety from AdoMet to the 7-aminomethyl group of 7-deazaguanine (preQ1-tRNA) to give epoxyqueuosine (oQ-tRNA). In Haemophilus influenzae (strain PittGG), this protein is S-adenosylmethionine:tRNA ribosyltransferase-isomerase.